The following is an 89-amino-acid chain: Phosphocarrier protein HPr (89 aa).

Residues 1-88 (MLQRDTTIIN…ALIANRFGEG (88 aa)) form the HPr domain. The Pros-phosphohistidine intermediate role is filled by H15.

It belongs to the HPr family.

The protein localises to the cytoplasm. Its function is as follows. General (non sugar-specific) component of the phosphoenolpyruvate-dependent sugar phosphotransferase system (sugar PTS). This major carbohydrate active-transport system catalyzes the phosphorylation of incoming sugar substrates concomitantly with their translocation across the cell membrane. The phosphoryl group from phosphoenolpyruvate (PEP) is transferred to the phosphoryl carrier protein HPr by enzyme I. Phospho-HPr then transfers it to the PTS EIIA domain. The protein is Phosphocarrier protein HPr (phbH) of Cupriavidus necator (strain ATCC 17699 / DSM 428 / KCTC 22496 / NCIMB 10442 / H16 / Stanier 337) (Ralstonia eutropha).